The primary structure comprises 260 residues: MVYTSLSSKDGNYPYQLNIAHLYGNLMNTYGDNGNILMLKYVAEKLGAHVTVDIVSLHDDFDENHYDIAFFGGGQDFEQSIIADDLPAKKESIDNYIQNDGVVLAICGGFQLLGQYYVEASGKRIEGLGVMGHYTLNQTNNRFIGDIKIHNEDFDETYYGFENHQGRTFLSDDQKPLGQVVYGNGNNEEKVGEGVHYKNVFGSYFHGPILSRNANLAYRLVTTALKKKYGQDIQLPAYEDILSQEIAEEYSDVKSKADFS.

The GATase cobBQ-type domain occupies 16 to 214 (QLNIAHLYGN…FHGPILSRNA (199 aa)). Cysteine 107 serves as the catalytic Nucleophile. Residue arginine 142 participates in substrate binding. Histidine 206 is a catalytic residue.

The protein belongs to the CobB/CobQ family. GatD subfamily. Forms a heterodimer with MurT.

It carries out the reaction beta-D-GlcNAc-(1-&gt;4)-Mur2Ac(oyl-L-Ala-gamma-D-Glu-L-Lys-D-Ala-D-Ala)-di-trans,octa-cis-undecaprenyl diphosphate + L-glutamine + ATP + H2O = beta-D-GlcNAc-(1-&gt;4)-Mur2Ac(oyl-L-Ala-D-isoglutaminyl-L-Lys-D-Ala-D-Ala)-di-trans,octa-cis-undecaprenyl diphosphate + L-glutamate + ADP + phosphate + H(+). The enzyme catalyses L-glutamine + H2O = L-glutamate + NH4(+). Its pathway is cell wall biogenesis; peptidoglycan biosynthesis. Functionally, the lipid II isoglutaminyl synthase complex catalyzes the formation of alpha-D-isoglutamine in the cell wall lipid II stem peptide. The GatD subunit catalyzes the hydrolysis of glutamine to glutamate and ammonia. The resulting ammonia molecule is channeled to the active site of MurT. The protein is Lipid II isoglutaminyl synthase (glutamine-hydrolyzing) subunit GatD of Streptococcus pneumoniae (strain ATCC BAA-255 / R6).